Reading from the N-terminus, the 927-residue chain is Valine--tRNA ligase (927 aa).

Residues 45-55 (PNVTGSLHMGH) carry the 'HIGH' region motif. The short motif at 571 to 575 (KMSKS) is the 'KMSKS' region element. K574 provides a ligand contact to ATP. Positions 856-917 (SLIDLAAEAA…EYRDAQDKLA (62 aa)) form a coiled coil.

This sequence belongs to the class-I aminoacyl-tRNA synthetase family. ValS type 1 subfamily. In terms of assembly, monomer.

It localises to the cytoplasm. The catalysed reaction is tRNA(Val) + L-valine + ATP = L-valyl-tRNA(Val) + AMP + diphosphate. In terms of biological role, catalyzes the attachment of valine to tRNA(Val). As ValRS can inadvertently accommodate and process structurally similar amino acids such as threonine, to avoid such errors, it has a 'posttransfer' editing activity that hydrolyzes mischarged Thr-tRNA(Val) in a tRNA-dependent manner. This chain is Valine--tRNA ligase, found in Mesorhizobium japonicum (strain LMG 29417 / CECT 9101 / MAFF 303099) (Mesorhizobium loti (strain MAFF 303099)).